Reading from the N-terminus, the 119-residue chain is Basic phospholipase A2 notechis II-5 (119 aa).

Disulfide bonds link Cys11–Cys71, Cys27–Cys118, Cys29–Cys45, Cys44–Cys99, Cys51–Cys92, Cys60–Cys85, and Cys78–Cys90. Residues Tyr28, Gly30, and Gly32 each contribute to the Ca(2+) site. His48 is an active-site residue. Asp49 contacts Ca(2+). Asp93 is an active-site residue.

It belongs to the phospholipase A2 family. Group I subfamily. D49 sub-subfamily. Ca(2+) is required as a cofactor. In terms of tissue distribution, expressed by the venom gland.

The protein resides in the secreted. The enzyme catalyses a 1,2-diacyl-sn-glycero-3-phosphocholine + H2O = a 1-acyl-sn-glycero-3-phosphocholine + a fatty acid + H(+). In terms of biological role, snake venom phospholipase A2 (PLA2) that inhibits neuromuscular transmission by blocking acetylcholine release from the nerve termini. Notechis II-5 is less toxic than notexin but has a higher specific phospholipase activity. PLA2 catalyzes the calcium-dependent hydrolysis of the 2-acyl groups in 3-sn-phosphoglycerides. In Notechis scutatus scutatus (Mainland tiger snake), this protein is Basic phospholipase A2 notechis II-5.